We begin with the raw amino-acid sequence, 626 residues long: Chaperone protein HtpG (626 aa).

The segment at 1 to 339 is a; substrate-binding; the sequence is MSQNQETRGF…SNDLPLNVSR (339 aa). A b region spans residues 340–555; sequence EILQDNKITA…NDQMTTQMAK (216 aa). Positions 556 to 626 are c; sequence LFAAAGQPVP…FIKRINKLLG (71 aa).

This sequence belongs to the heat shock protein 90 family. Homodimer.

The protein localises to the cytoplasm. In terms of biological role, molecular chaperone. Has ATPase activity. The sequence is that of Chaperone protein HtpG from Haemophilus influenzae (strain 86-028NP).